We begin with the raw amino-acid sequence, 290 residues long: Phosphate import ATP-binding protein PstB (290 aa).

Residues 25-285 (LEARNLDFYY…PKTRRARDYL (261 aa)) enclose the ABC transporter domain. 57–64 (GPSGCGKS) lines the ATP pocket.

This sequence belongs to the ABC transporter superfamily. Phosphate importer (TC 3.A.1.7) family. The complex is composed of two ATP-binding proteins (PstB), two transmembrane proteins (PstC and PstA) and a solute-binding protein (PstS).

Its subcellular location is the cell inner membrane. The enzyme catalyses phosphate(out) + ATP + H2O = ADP + 2 phosphate(in) + H(+). Its function is as follows. Part of the ABC transporter complex PstSACB involved in phosphate import. Responsible for energy coupling to the transport system. This is Phosphate import ATP-binding protein PstB from Zymomonas mobilis subsp. mobilis (strain ATCC 31821 / ZM4 / CP4).